A 246-amino-acid chain; its full sequence is tRNA pseudouridine synthase A (246 aa).

Asp52 (nucleophile) is an active-site residue. A substrate-binding site is contributed by Tyr111.

It belongs to the tRNA pseudouridine synthase TruA family. Homodimer.

The catalysed reaction is uridine(38/39/40) in tRNA = pseudouridine(38/39/40) in tRNA. Its function is as follows. Formation of pseudouridine at positions 38, 39 and 40 in the anticodon stem and loop of transfer RNAs. This Borreliella afzelii (strain PKo) (Borrelia afzelii) protein is tRNA pseudouridine synthase A.